The following is a 77-amino-acid chain: MDSTNVRSGMKSRKKKPKTTVIDDDDDCMTCSACQSKLVKISDITKVSLDYINTMRGNTLACAACGSSLKLLNDFAS.

Belongs to the orthopoxvirus OPG146 family. In terms of assembly, interacts with capping enzyme RAP94/OPG109, the two large RNA polymerase subunits RPO147/OPG105 and RPO132/OPG151, the two early transcription factor subunits OPG185 and OPG133, one of the capping enzyme subunits OPG113, the nucleoside triphosphate phosphohydrolase OPG123, two core proteins OPG129 and OPG138, and a virion protein OPG064.

The protein resides in the virion. The protein localises to the host cytoplasm. It is found in the host nucleus. Plays a role in the maturation of immature virions to infectious particles. May also participate in viral transcription. This is Protein OPG146 (OPG146) from Homo sapiens (Human).